We begin with the raw amino-acid sequence, 868 residues long: MSDVTVRQLAGIVGIPLDRLLHQLGDAGLQISDADDVLSDAEKMKLLNHLRQSHGKVQESVTEPKRVTLQRRSVTELKQGTVPGKGAKTISVEVRKKRTYVKRSELPETSDRLSEAEQARRALEEQQQRELAEQEARRQQEEMLREQAAEEERRRQEEAARTAEERRRRDEEERQAAAERETVAAKPAPVAAPPIPRPAPEPRPPARPSAGKPKAEAPRAHPAERETEARGDKRSAGLSRKDEYRELQGDDFRKGGGKRKKPKTGRPMLMPEQKHGFEKPTAPIVYEVAVPESITVSDLAQRMSVKGVEVIKALMKMGVMATINQVLDQETAILVVEEMGHKAIAQKEDDLEAEIMANLAAEAEAPQLPRPPVVTIMGHVDHGKTSLLDYIRKSRVAAGEAGGITQHIGAYQVKTDHGSITFLDTPGHAAFTAMRARGAKVTDIVVLVVAADDGVMPQTREAVEHSRAAGVPLVVAMNKMDKADADPDRVKQELVGLNVVPEEWGGDVQFVPVSAKTGAGIDTLLDAILVQAEVLELKAPVAIPAAGVVLESKLEKGRGPVADILIQRGTLKKGDFLLCGKEIGRVRAMFNENGKPLKEAGPSAPIEVLGLSGAPEAGDEFIVVADERKAREIALHREEKLRSTKLAAQQAAKLEDVFSLMGSEETIDLNLVIKADVQGSLEALRSALTELSTDKVKVRVIGGGVGGISETDANLALASNAILIGFNVRADGSARKLIEERGIDLHYYSVIYNAIDEVKKSINGMLEPEFKEQIIGIAQVREVFRSSKFGTVAGCLVVEGHVRRNLPIRVLRDNVVIFEGQLESLRRFKDDVNEVKSGMECGIAVRNYNDVREGDQIEVFEKVQVAPH.

Basic and acidic residues predominate over residues 103 to 183; the sequence is RSELPETSDR…RQAAAERETV (81 aa). Residues 103-274 form a disordered region; the sequence is RSELPETSDR…GRPMLMPEQK (172 aa). Residues 190 to 207 are compositionally biased toward pro residues; it reads VAAPPIPRPAPEPRPPAR. The span at 213 to 254 shows a compositional bias: basic and acidic residues; the sequence is PKAEAPRAHPAERETEARGDKRSAGLSRKDEYRELQGDDFRK. Over residues 255–264 the composition is skewed to basic residues; that stretch reads GGGKRKKPKT. In terms of domain architecture, tr-type G spans 369-538; the sequence is PRPPVVTIMG…LVQAEVLELK (170 aa). Positions 378–385 are G1; the sequence is GHVDHGKT. Residue 378–385 coordinates GTP; that stretch reads GHVDHGKT. A G2 region spans residues 403–407; that stretch reads GITQH. The G3 stretch occupies residues 424–427; it reads DTPG. Residues 424-428 and 478-481 each bind GTP; these read DTPGH and NKMD. The G4 stretch occupies residues 478–481; sequence NKMD. Positions 514 to 516 are G5; it reads SAK.

The protein belongs to the TRAFAC class translation factor GTPase superfamily. Classic translation factor GTPase family. IF-2 subfamily.

It localises to the cytoplasm. Functionally, one of the essential components for the initiation of protein synthesis. Protects formylmethionyl-tRNA from spontaneous hydrolysis and promotes its binding to the 30S ribosomal subunits. Also involved in the hydrolysis of GTP during the formation of the 70S ribosomal complex. This is Translation initiation factor IF-2 from Methylococcus capsulatus (strain ATCC 33009 / NCIMB 11132 / Bath).